The sequence spans 272 residues: 2-dehydro-3-deoxyphosphooctonate aldolase (272 aa).

This sequence belongs to the KdsA family.

It is found in the cytoplasm. It carries out the reaction D-arabinose 5-phosphate + phosphoenolpyruvate + H2O = 3-deoxy-alpha-D-manno-2-octulosonate-8-phosphate + phosphate. It functions in the pathway carbohydrate biosynthesis; 3-deoxy-D-manno-octulosonate biosynthesis; 3-deoxy-D-manno-octulosonate from D-ribulose 5-phosphate: step 2/3. It participates in bacterial outer membrane biogenesis; lipopolysaccharide biosynthesis. The sequence is that of 2-dehydro-3-deoxyphosphooctonate aldolase from Geotalea uraniireducens (strain Rf4) (Geobacter uraniireducens).